A 320-amino-acid polypeptide reads, in one-letter code: Lipoyl synthase (320 aa).

Over residues 1 to 11 (MGGMNDLSSTP) the composition is skewed to polar residues. A disordered region spans residues 1 to 24 (MGGMNDLSSTPAPEGDRPARQRKP). The span at 14–24 (EGDRPARQRKP) shows a compositional bias: basic and acidic residues. Residues C53, C58, C64, C79, C83, C86, and S293 each contribute to the [4Fe-4S] cluster site. Positions 65–282 (WTKKHATVMI…GAIARAKGFL (218 aa)) constitute a Radical SAM core domain.

It belongs to the radical SAM superfamily. Lipoyl synthase family. [4Fe-4S] cluster serves as cofactor.

Its subcellular location is the cytoplasm. The catalysed reaction is [[Fe-S] cluster scaffold protein carrying a second [4Fe-4S](2+) cluster] + N(6)-octanoyl-L-lysyl-[protein] + 2 oxidized [2Fe-2S]-[ferredoxin] + 2 S-adenosyl-L-methionine + 4 H(+) = [[Fe-S] cluster scaffold protein] + N(6)-[(R)-dihydrolipoyl]-L-lysyl-[protein] + 4 Fe(3+) + 2 hydrogen sulfide + 2 5'-deoxyadenosine + 2 L-methionine + 2 reduced [2Fe-2S]-[ferredoxin]. Its pathway is protein modification; protein lipoylation via endogenous pathway; protein N(6)-(lipoyl)lysine from octanoyl-[acyl-carrier-protein]: step 2/2. Functionally, catalyzes the radical-mediated insertion of two sulfur atoms into the C-6 and C-8 positions of the octanoyl moiety bound to the lipoyl domains of lipoate-dependent enzymes, thereby converting the octanoylated domains into lipoylated derivatives. This chain is Lipoyl synthase, found in Erythrobacter litoralis (strain HTCC2594).